We begin with the raw amino-acid sequence, 523 residues long: 2-isopropylmalate synthase (523 aa).

The Pyruvate carboxyltransferase domain maps to 5–267 (VIIFDTTLRD…HTNINHHEIW (263 aa)). 4 residues coordinate Mn(2+): Asp-14, His-202, His-204, and Asn-238. The segment at 392–523 (RLDYFSVQSG…HNKENNKEIV (132 aa)) is regulatory domain.

It belongs to the alpha-IPM synthase/homocitrate synthase family. LeuA type 1 subfamily. Homodimer. The cofactor is Mn(2+).

Its subcellular location is the cytoplasm. It catalyses the reaction 3-methyl-2-oxobutanoate + acetyl-CoA + H2O = (2S)-2-isopropylmalate + CoA + H(+). It functions in the pathway amino-acid biosynthesis; L-leucine biosynthesis; L-leucine from 3-methyl-2-oxobutanoate: step 1/4. Catalyzes the condensation of the acetyl group of acetyl-CoA with 3-methyl-2-oxobutanoate (2-ketoisovalerate) to form 3-carboxy-3-hydroxy-4-methylpentanoate (2-isopropylmalate). This Salmonella arizonae (strain ATCC BAA-731 / CDC346-86 / RSK2980) protein is 2-isopropylmalate synthase.